Reading from the N-terminus, the 896-residue chain is DNA mismatch repair protein MutS (896 aa).

Position 618-625 (618-625) interacts with ATP; the sequence is GPNMSGKS. The segment covering 805–825 has biased composition (basic and acidic residues); it reads GKESTKTGKGENKNISHKTES. The interval 805–826 is disordered; sequence GKESTKTGKGENKNISHKTESD.

It belongs to the DNA mismatch repair MutS family.

Functionally, this protein is involved in the repair of mismatches in DNA. It is possible that it carries out the mismatch recognition step. This protein has a weak ATPase activity. This Halothermothrix orenii (strain H 168 / OCM 544 / DSM 9562) protein is DNA mismatch repair protein MutS.